We begin with the raw amino-acid sequence, 327 residues long: Deoxynucleotidyltransferase terminal-interacting protein 1 (327 aa).

The segment covering 1-11 (MGATGDTGGPR) has biased composition (gly residues). 2 disordered regions span residues 1–34 (MGAT…PVLT) and 146–172 (KRGR…LPGH). Residues 55 to 146 (MTTSFTDPAI…RLAHELPGIK (92 aa)) form an important for dimerization region. Residues 146-161 (KRGRQAEEESHREAPF) show a composition bias toward basic and acidic residues. Positions 157 to 171 (REAPFPKRGKVGLPG) form a DNA-binding region, a.T hook. The short motif at 162 to 168 (PKRGKVG) is the Nuclear localization signal element. The important for DNA and nucleosome binding stretch occupies residues 195 to 314 (REGPKWDPAR…MRKYMETLRT (120 aa)). A DNA-binding region (H-T-H motif) is located at residues 214 to 235 (GSRANKALGMGGTRGRIYIKHP).

In terms of assembly, monomer and homodimer. A minor proportion may form homotrimers. Interacts with ZNF541. Interacts with the terminal deoxynucleotidyltransferase DNTT. Interacts with TRERF1. Identified in a histone deacetylase complex that contains DNTTIP1, HDAC1 and MIDEAS; this complex assembles into a tetramer that contains four copies of each protein chain. Component of a histone deacetylase complex containing DNTTIP1, ZNF541, HDAC1 and HDAC2. Identified in a complex with KCTD19, HDAC1, HDAC2 and ZNF541. In terms of tissue distribution, expressed in thymus, bone marrow and spleen.

It is found in the nucleus. Its function is as follows. Increases DNTT terminal deoxynucleotidyltransferase activity (in vitro). Also acts as a transcriptional regulator, binding to the consensus sequence 5'-GNTGCATG-3' following an AT-tract. Associates with RAB20 promoter and positively regulates its transcription. Binds DNA and nucleosomes; may recruit HDAC1 complexes to nucleosomes or naked DNA. This is Deoxynucleotidyltransferase terminal-interacting protein 1 (Dnttip1) from Rattus norvegicus (Rat).